Here is a 401-residue protein sequence, read N- to C-terminus: Probable aspartate/prephenate aminotransferase (401 aa).

3 residues coordinate L-aspartate: Gly-39, Trp-125, and Asn-175. Residue Lys-239 is modified to N6-(pyridoxal phosphate)lysine. Arg-375 contributes to the L-aspartate binding site.

Belongs to the class-I pyridoxal-phosphate-dependent aminotransferase family. As to quaternary structure, homodimer. Requires pyridoxal 5'-phosphate as cofactor.

Its subcellular location is the cytoplasm. The catalysed reaction is L-aspartate + 2-oxoglutarate = oxaloacetate + L-glutamate. It carries out the reaction L-arogenate + 2-oxoglutarate = prephenate + L-glutamate. Catalyzes the reversible conversion of aspartate and 2-oxoglutarate to glutamate and oxaloacetate. Can also transaminate prephenate in the presence of glutamate. The polypeptide is Probable aspartate/prephenate aminotransferase (aatA) (Rickettsia conorii (strain ATCC VR-613 / Malish 7)).